The chain runs to 508 residues: Lysine--tRNA ligase (508 aa).

2 residues coordinate Mg(2+): glutamate 418 and glutamate 425.

The protein belongs to the class-II aminoacyl-tRNA synthetase family. As to quaternary structure, homodimer. Mg(2+) serves as cofactor.

The protein localises to the cytoplasm. It catalyses the reaction tRNA(Lys) + L-lysine + ATP = L-lysyl-tRNA(Lys) + AMP + diphosphate. The protein is Lysine--tRNA ligase of Burkholderia vietnamiensis (strain G4 / LMG 22486) (Burkholderia cepacia (strain R1808)).